Here is a 959-residue protein sequence, read N- to C-terminus: E3 ubiquitin-protein ligase NEDD4-like (959 aa).

One can recognise a C2 domain in the interval 10–130 (PWHGVCVPVC…TEDPTMERPY (121 aa)). Disordered regions lie at residues 183-206 (SNDS…WEEK), 248-275 (AAHR…DVPE), and 289-316 (DSLG…EELS). A WW 1 domain is found at 197-230 (PPLPPGWEEKVDNLGRTYYVNHNNRTTQWHRPSL). The residue at position 316 (serine 316) is a Phosphoserine. Position 322 is a phosphothreonine (threonine 322). Serine 346 carries the post-translational modification Phosphoserine; by WNK1 and WNK4. In terms of domain architecture, WW 2 spans 369 to 402 (PGLPSGWEERKDAKGRTYYVNHNNRTTTWTRPIM). Residues 408–478 (GASGSATNSN…YNSPKPQHKV (71 aa)) are disordered. Serine 430 carries the post-translational modification Phosphoserine. Serine 432 carries the post-translational modification Phosphoserine; by SGK1. Serine 433 carries the phosphoserine; by WNK1 and WNK4 modification. A compositionally biased stretch (basic and acidic residues) spans 444 to 455 (GAKDSPVRRAVK). Serine 448 is subject to Phosphoserine; by SGK1. Residues serine 459, serine 463, serine 467, and serine 471 each carry the phosphoserine modification. WW domains lie at 481–514 (SFLP…DPRL) and 532–565 (GPLP…DPRL). One can recognise an HECT domain in the interval 624–958 (RPDVLKARLW…VENAQGFEGV (335 aa)). Cysteine 926 acts as the Glycyl thioester intermediate in catalysis.

Interacts with UBE2E3. Interacts with NDFIP1; this interaction activates the E3 ubiquitin-protein ligase. Interacts with NDFIP2; this interaction activates the E3 ubiquitin-protein ligase. Interacts (via WW domains) with SCN1A. Interacts (via WW domains) with SCN2A. Interacts (via WW domains) with SCN3A. Interacts (via WW domains) with SCN5A. Interacts (via WW domains) with SCN8A. Interacts (via WW domains) with SCN9A. Interacts (via WW domains) with SCN10A. Interacts (via WW domains) with CLCN5. Interacts with SMAD2. Interacts with SMAD3. Interacts with SMAD6. Interacts with SMAD7. The phosphorylated form interacts with 14-3-3 proteins. Interacts with TNK2. Interacts with WNK1. Interacts with SGK1. Interacts (via C2 domain) with NPC2. Interacts with ARRDC4. Interacts with KCNQ1; promotes internalization of KCNQ1. Interacts (via domains WW1, 3 and 4) with USP36; the interaction inhibits ubiquitination of, at least, NTRK1, KCNQ2 and KCNQ3 by NEDD4L. Interacts with PRRG4 (via cytoplasmic domain). Interacts with LDLRAD3; the interaction is direct. Interacts with TTYH2 and TTYH3. In terms of processing, phosphorylated; which impairs interaction with SCNN. Interaction with YWHAH inhibits dephosphorylation. Auto-ubiquitinated.

It localises to the cytoplasm. The protein localises to the golgi apparatus. The protein resides in the endosome. It is found in the multivesicular body. It carries out the reaction S-ubiquitinyl-[E2 ubiquitin-conjugating enzyme]-L-cysteine + [acceptor protein]-L-lysine = [E2 ubiquitin-conjugating enzyme]-L-cysteine + N(6)-ubiquitinyl-[acceptor protein]-L-lysine.. It functions in the pathway protein modification; protein ubiquitination. With respect to regulation, activated by NDFIP1- and NDFIP2-binding. E3 ubiquitin-protein ligase which accepts ubiquitin from an E2 ubiquitin-conjugating enzyme in the form of a thioester and then directly transfers the ubiquitin to targeted substrates. Inhibits TGF-beta signaling by triggering SMAD2 and TGFBR1 ubiquitination and proteasome-dependent degradation. Promotes ubiquitination and internalization of various plasma membrane channels such as ENaC, Nav1.2, Nav1.3, Nav1.5, Nav1.7, Nav1.8, Kv1.3, KCNH2, EAAT1 or CLC5. Promotes ubiquitination and degradation of SGK1 and TNK2. Ubiquitinates BRAT1 and this ubiquitination is enhanced in the presence of NDFIP1. Plays a role in dendrite formation by melanocytes. Involved in the regulation of TOR signaling. Ubiquitinates TTYH2 and TTYH3 and regulates protein levels of TTYH2. In Pongo abelii (Sumatran orangutan), this protein is E3 ubiquitin-protein ligase NEDD4-like (NEDD4L).